We begin with the raw amino-acid sequence, 455 residues long: Bifunctional protein GlmU (455 aa).

Residues 1–225 (MNIVILAAGL…EWETLGVNSK (225 aa)) are pyrophosphorylase. UDP-N-acetyl-alpha-D-glucosamine-binding positions include 6 to 9 (LAAG), K20, Q71, 76 to 77 (GT), 98 to 100 (YGD), G135, E150, N165, and N223. D100 provides a ligand contact to Mg(2+). Residue N223 coordinates Mg(2+). Residues 226-246 (VQLAELERIHQRNLAQQLLED) are linker. The interval 247–455 (GVTLIDPARI…QRPVKQKKDA (209 aa)) is N-acetyltransferase. The UDP-N-acetyl-alpha-D-glucosamine site is built by R329 and K347. H359 acts as the Proton acceptor in catalysis. Residues Y362 and N373 each coordinate UDP-N-acetyl-alpha-D-glucosamine. Acetyl-CoA contacts are provided by residues A376, 382–383 (NY), S401, A419, and R436.

It in the N-terminal section; belongs to the N-acetylglucosamine-1-phosphate uridyltransferase family. This sequence in the C-terminal section; belongs to the transferase hexapeptide repeat family. As to quaternary structure, homotrimer. It depends on Mg(2+) as a cofactor.

It localises to the cytoplasm. The enzyme catalyses alpha-D-glucosamine 1-phosphate + acetyl-CoA = N-acetyl-alpha-D-glucosamine 1-phosphate + CoA + H(+). It catalyses the reaction N-acetyl-alpha-D-glucosamine 1-phosphate + UTP + H(+) = UDP-N-acetyl-alpha-D-glucosamine + diphosphate. It participates in nucleotide-sugar biosynthesis; UDP-N-acetyl-alpha-D-glucosamine biosynthesis; N-acetyl-alpha-D-glucosamine 1-phosphate from alpha-D-glucosamine 6-phosphate (route II): step 2/2. It functions in the pathway nucleotide-sugar biosynthesis; UDP-N-acetyl-alpha-D-glucosamine biosynthesis; UDP-N-acetyl-alpha-D-glucosamine from N-acetyl-alpha-D-glucosamine 1-phosphate: step 1/1. Its pathway is bacterial outer membrane biogenesis; LPS lipid A biosynthesis. Catalyzes the last two sequential reactions in the de novo biosynthetic pathway for UDP-N-acetylglucosamine (UDP-GlcNAc). The C-terminal domain catalyzes the transfer of acetyl group from acetyl coenzyme A to glucosamine-1-phosphate (GlcN-1-P) to produce N-acetylglucosamine-1-phosphate (GlcNAc-1-P), which is converted into UDP-GlcNAc by the transfer of uridine 5-monophosphate (from uridine 5-triphosphate), a reaction catalyzed by the N-terminal domain. This Ralstonia nicotianae (strain ATCC BAA-1114 / GMI1000) (Ralstonia solanacearum) protein is Bifunctional protein GlmU.